The primary structure comprises 202 residues: Holliday junction branch migration complex subunit RuvA (202 aa).

The tract at residues 1 to 64 (MISRLRGTVL…EDAFDLFGFL (64 aa)) is domain I. A domain II region spans residues 65-143 (TKGEEEVFLL…TIHLEAVSRG (79 aa)). Residues 143–147 (GTAPA) form a flexible linker region. The tract at residues 148–202 (AVSGAHADLVSALLNLGYKQPQAEKAADLASERLGAEATFQALFREALKALRSGG) is domain III.

This sequence belongs to the RuvA family. Homotetramer. Forms an RuvA(8)-RuvB(12)-Holliday junction (HJ) complex. HJ DNA is sandwiched between 2 RuvA tetramers; dsDNA enters through RuvA and exits via RuvB. An RuvB hexamer assembles on each DNA strand where it exits the tetramer. Each RuvB hexamer is contacted by two RuvA subunits (via domain III) on 2 adjacent RuvB subunits; this complex drives branch migration. In the full resolvosome a probable DNA-RuvA(4)-RuvB(12)-RuvC(2) complex forms which resolves the HJ.

The protein resides in the cytoplasm. In terms of biological role, the RuvA-RuvB-RuvC complex processes Holliday junction (HJ) DNA during genetic recombination and DNA repair, while the RuvA-RuvB complex plays an important role in the rescue of blocked DNA replication forks via replication fork reversal (RFR). RuvA specifically binds to HJ cruciform DNA, conferring on it an open structure. The RuvB hexamer acts as an ATP-dependent pump, pulling dsDNA into and through the RuvAB complex. HJ branch migration allows RuvC to scan DNA until it finds its consensus sequence, where it cleaves and resolves the cruciform DNA. This is Holliday junction branch migration complex subunit RuvA from Myxococcus xanthus (strain DK1622).